The chain runs to 286 residues: MLPLLAALLAAACQLPPAHGGATDAPGLAGTPPNASANASFTNEHSTPRLLASAASAPPERSGPEEAPAAPCNISVQRQMLSSLLVRWGRPRGLQCDLLLFSTNAHGRAFFAAAFHRVGPPLLIEHLGLAAGGAQQDLRLCVGCGWVRGRLRAPAGAPTALPAYPAAEPGPLWLQGEPRHFCCLDFSLEELQGEPGWRLNRKPIESTLVACFMTLVIVVWSVAALIWPVPIIAGFLPNGMEQRRTTAGAPAAAPAAVPAGTTAAAAAAAAAAAAAAAAVTSGVAPK.

Residues 1 to 20 form the signal peptide; it reads MLPLLAALLAAACQLPPAHG. Disordered regions lie at residues 20–43 and 52–71; these read GGAT…SFTN and ASAA…PAAP. Residues 33-43 show a composition bias toward polar residues; the sequence is PNASANASFTN. N-linked (GlcNAc...) asparagine glycosylation occurs at Asn-73. The next 2 membrane-spanning stretches (helical) occupy residues 215-235 and 263-283; these read LVIV…IAGF and AAAA…TSGV.

This sequence belongs to the TMEM158 family. In terms of processing, N-glycosylated. Ubiquitously expressed. Brain is the major site of expression.

It is found in the membrane. Receptor for brain injury-derived neurotrophic peptide (BINP), a synthetic 13-mer peptide. The sequence is that of Transmembrane protein 158 (Tmem158) from Mus musculus (Mouse).